Here is a 152-residue protein sequence, read N- to C-terminus: Endoribonuclease YbeY (152 aa).

Zn(2+)-binding residues include H118, H122, and H128.

This sequence belongs to the endoribonuclease YbeY family. Requires Zn(2+) as cofactor.

The protein localises to the cytoplasm. In terms of biological role, single strand-specific metallo-endoribonuclease involved in late-stage 70S ribosome quality control and in maturation of the 3' terminus of the 16S rRNA. In Lacticaseibacillus casei (strain BL23) (Lactobacillus casei), this protein is Endoribonuclease YbeY.